We begin with the raw amino-acid sequence, 887 residues long: Inter-alpha-trypsin inhibitor heavy chain H3 (887 aa).

The N-terminal stretch at 1-21 (MVTLWWPCLVLALLSGLETSG) is a signal peptide. The propeptide occupies 22-33 (FPRSPLRLLGKR). Residues 29–158 (LLGKRSLPEG…KVIFELTYEE (130 aa)) form the VIT domain. Asn-91 carries N-linked (GlcNAc...) asparagine glycosylation. The 161-residue stretch at 282 to 442 (PKNIAFVIDV…YNFLESLALE (161 aa)) folds into the VWFA domain. Asn-580 carries N-linked (GlcNAc...) asparagine glycosylation. Position 647 is an aspartate 1-(chondroitin 4-sulfate)-ester (Asp-647). A propeptide spanning residues 648 to 887 (PHFIIQVPGK…HTDYIVPSLF (240 aa)) is cleaved from the precursor.

Belongs to the ITIH family. As to quaternary structure, I-alpha-I plasma protease inhibitors are assembled from one or two heavy chains (HC) and one light chain, bikunin. Pre-alpha-inhibitor (P-alpha-I) is composed of ITIH3/HC3 and bikunin. In terms of processing, heavy chains are linked to bikunin via chondroitin 4-sulfate esterified to the alpha-carboxyl of the C-terminal aspartate after propeptide cleavage.

The protein localises to the secreted. May act as a carrier of hyaluronan in serum or as a binding protein between hyaluronan and other matrix protein, including those on cell surfaces in tissues to regulate the localization, synthesis and degradation of hyaluronan which are essential to cells undergoing biological processes. The protein is Inter-alpha-trypsin inhibitor heavy chain H3 (Itih3) of Rattus norvegicus (Rat).